We begin with the raw amino-acid sequence, 916 residues long: Beta-scruin (916 aa).

Kelch repeat units follow at residues alanine 82–glycine 133, lysine 134–glutamate 187, arginine 188–glycine 235, isoleucine 237–lysine 289, isoleucine 291–threonine 341, and glutamine 342–valine 390. Residues serine 393–arginine 426 are disordered. Basic and acidic residues predominate over residues threonine 414 to alanine 425. 6 Kelch repeats span residues valine 586–glycine 637, alanine 638–aspartate 691, serine 692–glycine 739, leucine 741–aspartate 793, isoleucine 795–serine 847, and leucine 849–proline 896.

Sperm.

In terms of biological role, may have an enzymatic role. Found the acrosomal vesicle at the anterior of sperm but not in the acrosomal process. The chain is Beta-scruin from Limulus polyphemus (Atlantic horseshoe crab).